Reading from the N-terminus, the 180-residue chain is Large ribosomal subunit protein uL5 (180 aa).

It belongs to the universal ribosomal protein uL5 family. Part of the 50S ribosomal subunit; part of the 5S rRNA/L5/L18/L25 subcomplex. Contacts the 5S rRNA and the P site tRNA. Forms a bridge to the 30S subunit in the 70S ribosome.

In terms of biological role, this is one of the proteins that bind and probably mediate the attachment of the 5S RNA into the large ribosomal subunit, where it forms part of the central protuberance. In the 70S ribosome it contacts protein S13 of the 30S subunit (bridge B1b), connecting the 2 subunits; this bridge is implicated in subunit movement. Contacts the P site tRNA; the 5S rRNA and some of its associated proteins might help stabilize positioning of ribosome-bound tRNAs. This is Large ribosomal subunit protein uL5 from Solibacter usitatus (strain Ellin6076).